A 145-amino-acid chain; its full sequence is MKKSARRQSRELATQGLYQWLLSNAAPGEIDAQLRGALGYDKADKTLLDTILHGVIREHATLAEAISPSLDRPIDQLSPVERAVLLIATYELTHQIETPYRVIINEAVELAKTFGGSDGYKYVNGVLDKLAVKLRPAETQARRGA.

Belongs to the NusB family.

Functionally, involved in transcription antitermination. Required for transcription of ribosomal RNA (rRNA) genes. Binds specifically to the boxA antiterminator sequence of the ribosomal RNA (rrn) operons. The polypeptide is Transcription antitermination protein NusB (Burkholderia mallei (strain NCTC 10247)).